The sequence spans 278 residues: tRNA uridine(34) hydroxylase (278 aa).

The Rhodanese domain occupies 122 to 216 (QDPDVVVIDT…YLETIAPEES (95 aa)). The active-site Cysteine persulfide intermediate is the Cys-176.

Belongs to the TrhO family.

The enzyme catalyses uridine(34) in tRNA + AH2 + O2 = 5-hydroxyuridine(34) in tRNA + A + H2O. Its function is as follows. Catalyzes oxygen-dependent 5-hydroxyuridine (ho5U) modification at position 34 in tRNAs. The protein is tRNA uridine(34) hydroxylase of Synechocystis sp. (strain ATCC 27184 / PCC 6803 / Kazusa).